The primary structure comprises 179 residues: MTQVSGASDVPSMGRRQFMNLLTFGSVTGVALGALYPVVNYFIPPSSGGSGGGVAAKDALGNDVVLSKFLADHNVGDRTLVQGLKGDPTYLVVESSEAIGDYGINAVCTHLGCVVPWNASENKFKCPCHGSQYDATGKVVRGPAPLSLALAHVSVTDDKVFLSPWTETDFRTGDNPWWA.

Residues 21–43 (LLTFGSVTGVALGALYPVVNYFI) form a helical membrane-spanning segment. The 102-residue stretch at 61 to 162 (GNDVVLSKFL…VSVTDDKVFL (102 aa)) folds into the Rieske domain. The [2Fe-2S] cluster site is built by cysteine 108, histidine 110, cysteine 126, and histidine 129. Cysteine 113 and cysteine 128 are joined by a disulfide.

This sequence belongs to the Rieske iron-sulfur protein family. In terms of assembly, the 4 large subunits of the cytochrome b6-f complex are cytochrome b6, subunit IV (17 kDa polypeptide, PetD), cytochrome f and the Rieske protein, while the 4 small subunits are PetG, PetL, PetM and PetN. The complex functions as a dimer. [2Fe-2S] cluster is required as a cofactor.

It is found in the cellular thylakoid membrane. It carries out the reaction 2 oxidized [plastocyanin] + a plastoquinol + 2 H(+)(in) = 2 reduced [plastocyanin] + a plastoquinone + 4 H(+)(out). Its function is as follows. Component of the cytochrome b6-f complex, which mediates electron transfer between photosystem II (PSII) and photosystem I (PSI), cyclic electron flow around PSI, and state transitions. In Synechococcus elongatus (strain ATCC 33912 / PCC 7942 / FACHB-805) (Anacystis nidulans R2), this protein is Cytochrome b6-f complex iron-sulfur subunit.